A 90-amino-acid chain; its full sequence is Small ribosomal subunit protein bS18 (90 aa).

Belongs to the bacterial ribosomal protein bS18 family. In terms of assembly, part of the 30S ribosomal subunit. Forms a tight heterodimer with protein bS6.

Functionally, binds as a heterodimer with protein bS6 to the central domain of the 16S rRNA, where it helps stabilize the platform of the 30S subunit. In Bordetella bronchiseptica (strain ATCC BAA-588 / NCTC 13252 / RB50) (Alcaligenes bronchisepticus), this protein is Small ribosomal subunit protein bS18.